A 189-amino-acid chain; its full sequence is Transcriptional repressor NrdR (189 aa).

Residues 3 to 34 fold into a zinc finger; sequence CPFCRGDDSRVVDSREVEDGQAIRRRRSCSGC. One can recognise an ATP-cone domain in the interval 46 to 136; sequence LSVVKRSGVT…VYRAFSSVED (91 aa). A disordered region spans residues 152–189; sequence RLPEGPEAAQGGPESKAGNGQAAGSGDPEGVKAEKSSE. A compositionally biased stretch (basic and acidic residues) spans 180-189; sequence EGVKAEKSSE.

It belongs to the NrdR family. Zn(2+) serves as cofactor.

Functionally, negatively regulates transcription of bacterial ribonucleotide reductase nrd genes and operons by binding to NrdR-boxes. The protein is Transcriptional repressor NrdR of Saccharopolyspora erythraea (strain ATCC 11635 / DSM 40517 / JCM 4748 / NBRC 13426 / NCIMB 8594 / NRRL 2338).